Here is a 620-residue protein sequence, read N- to C-terminus: Glutathione-regulated potassium-efflux system protein KefC (620 aa).

The next 12 helical transmembrane spans lie at 4-24 (HTLI…PIAV), 26-46 (LGLG…PWGL), 54-74 (SILH…GLEL), 90-110 (GALQ…LLGL), 114-134 (VAEL…MQAM), 149-169 (FAVL…IPLL), 178-198 (MGAF…VVLL), 218-238 (VFSA…EEVG), 270-290 (GLLL…GTLI), 294-314 (LRIV…LWLI), 327-347 (WFAV…GAAQ), and 359-379 (SLTL…VILN). Residues 399 to 518 (QPRVIIAGFG…AGVEKPERET (120 aa)) enclose the RCK N-terminal domain. Residues 597–620 (GWQGTEEGKHTGNMADEPETKPSS) form a disordered region.

This sequence belongs to the monovalent cation:proton antiporter 2 (CPA2) transporter (TC 2.A.37) family. KefC subfamily. In terms of assembly, homodimer. Interacts with the regulatory subunit KefF.

Its subcellular location is the cell inner membrane. Its function is as follows. Pore-forming subunit of a potassium efflux system that confers protection against electrophiles. Catalyzes K(+)/H(+) antiport. This Escherichia coli (strain SMS-3-5 / SECEC) protein is Glutathione-regulated potassium-efflux system protein KefC.